The chain runs to 159 residues: Ribosomal RNA large subunit methyltransferase H (159 aa).

Residues Leu-76, Gly-108, and 127 to 132 (FGLLTL) each bind S-adenosyl-L-methionine.

Belongs to the RNA methyltransferase RlmH family. In terms of assembly, homodimer.

The protein resides in the cytoplasm. It catalyses the reaction pseudouridine(1915) in 23S rRNA + S-adenosyl-L-methionine = N(3)-methylpseudouridine(1915) in 23S rRNA + S-adenosyl-L-homocysteine + H(+). Specifically methylates the pseudouridine at position 1915 (m3Psi1915) in 23S rRNA. This chain is Ribosomal RNA large subunit methyltransferase H, found in Streptococcus pyogenes serotype M18 (strain MGAS8232).